We begin with the raw amino-acid sequence, 119 residues long: NADH-quinone oxidoreductase subunit A (119 aa).

3 consecutive transmembrane segments (helical) span residues 9-29, 63-83, and 88-108; these read IFLFILVGIGVGVAPQVLGYI, LVAILFILFDLEIAFLFPWAV, and IGALGFWSVMVFLTILVVGFI.

Belongs to the complex I subunit 3 family. As to quaternary structure, NDH-1 is composed of 14 different subunits. Subunits NuoA, H, J, K, L, M, N constitute the membrane sector of the complex.

It localises to the cell inner membrane. The enzyme catalyses a quinone + NADH + 5 H(+)(in) = a quinol + NAD(+) + 4 H(+)(out). NDH-1 shuttles electrons from NADH, via FMN and iron-sulfur (Fe-S) centers, to quinones in the respiratory chain. The immediate electron acceptor for the enzyme in this species is believed to be ubiquinone. Couples the redox reaction to proton translocation (for every two electrons transferred, four hydrogen ions are translocated across the cytoplasmic membrane), and thus conserves the redox energy in a proton gradient. The sequence is that of NADH-quinone oxidoreductase subunit A from Albidiferax ferrireducens (strain ATCC BAA-621 / DSM 15236 / T118) (Rhodoferax ferrireducens).